Here is a 277-residue protein sequence, read N- to C-terminus: Ribosomal RNA small subunit methyltransferase A (277 aa).

Asn-18, Leu-20, Gly-45, Glu-66, Asp-89, and Asn-110 together coordinate S-adenosyl-L-methionine.

It belongs to the class I-like SAM-binding methyltransferase superfamily. rRNA adenine N(6)-methyltransferase family. RsmA subfamily.

It is found in the cytoplasm. The catalysed reaction is adenosine(1518)/adenosine(1519) in 16S rRNA + 4 S-adenosyl-L-methionine = N(6)-dimethyladenosine(1518)/N(6)-dimethyladenosine(1519) in 16S rRNA + 4 S-adenosyl-L-homocysteine + 4 H(+). Specifically dimethylates two adjacent adenosines (A1518 and A1519) in the loop of a conserved hairpin near the 3'-end of 16S rRNA in the 30S particle. May play a critical role in biogenesis of 30S subunits. This Cupriavidus taiwanensis (strain DSM 17343 / BCRC 17206 / CCUG 44338 / CIP 107171 / LMG 19424 / R1) (Ralstonia taiwanensis (strain LMG 19424)) protein is Ribosomal RNA small subunit methyltransferase A.